Here is a 367-residue protein sequence, read N- to C-terminus: Ferredoxin--NADP reductase 2 (367 aa).

Asp-56, Gln-64, Tyr-69, Val-109, Phe-144, Asp-309, and Thr-350 together coordinate FAD.

The protein belongs to the ferredoxin--NADP reductase type 2 family. Homodimer. FAD serves as cofactor.

It catalyses the reaction 2 reduced [2Fe-2S]-[ferredoxin] + NADP(+) + H(+) = 2 oxidized [2Fe-2S]-[ferredoxin] + NADPH. This is Ferredoxin--NADP reductase 2 from Cupriavidus metallidurans (strain ATCC 43123 / DSM 2839 / NBRC 102507 / CH34) (Ralstonia metallidurans).